The chain runs to 225 residues: MGQKVNPIGLRIGITRNWDSVWFSKQDYIKNLHEDIKIRRFLQKKFKNASVVKIIIERFPEKINVNLHTSKPGMVIGQKGQNIEAVKQELKKFADKPIGMNIIEVKKPEIIAQAIAETVALQIEQRMPFRRVMKAELRRAMRGGVEGVKIQISGRLNGADMARTEKYMEGRVPLHTLRAKIDFGFKEALTTFGQIGVKVWTYTGDYFPTKEESDEDKYAVKRRTS.

Residues 38-106 (IRRFLQKKFK…PIGMNIIEVK (69 aa)) enclose the KH type-2 domain.

This sequence belongs to the universal ribosomal protein uS3 family. In terms of assembly, part of the 30S ribosomal subunit. Forms a tight complex with proteins S10 and S14.

In terms of biological role, binds the lower part of the 30S subunit head. Binds mRNA in the 70S ribosome, positioning it for translation. This is Small ribosomal subunit protein uS3 from Leptospira biflexa serovar Patoc (strain Patoc 1 / Ames).